A 265-amino-acid polypeptide reads, in one-letter code: Ribosomal RNA small subunit methyltransferase A (265 aa).

H13, L15, G40, E61, D85, and N103 together coordinate S-adenosyl-L-methionine.

It belongs to the class I-like SAM-binding methyltransferase superfamily. rRNA adenine N(6)-methyltransferase family. RsmA subfamily.

It localises to the cytoplasm. It catalyses the reaction adenosine(1518)/adenosine(1519) in 16S rRNA + 4 S-adenosyl-L-methionine = N(6)-dimethyladenosine(1518)/N(6)-dimethyladenosine(1519) in 16S rRNA + 4 S-adenosyl-L-homocysteine + 4 H(+). Specifically dimethylates two adjacent adenosines (A1518 and A1519) in the loop of a conserved hairpin near the 3'-end of 16S rRNA in the 30S particle. May play a critical role in biogenesis of 30S subunits. This is Ribosomal RNA small subunit methyltransferase A from Bordetella pertussis (strain Tohama I / ATCC BAA-589 / NCTC 13251).